The primary structure comprises 320 residues: 3-O-acetylpapaveroxine carboxylesterase CXE1 (320 aa).

Positions 72–74 match the Involved in the stabilization of the negatively charged intermediate by the formation of the oxyanion hole motif; sequence HGG. Residues Ser158, Asp262, and His292 contribute to the active site.

The protein belongs to the 'GDXG' lipolytic enzyme family.

The catalysed reaction is 3-O-acetylpapaveroxine + H2O = narcotine hemiacetal + acetate + H(+). Its pathway is alkaloid biosynthesis. Its function is as follows. Carboxylesterase involved in the biosynthesis of the benzylisoquinoline alkaloid noscapine. Converts 3-O-acetylpapaveroxine to papaveroxine which spontaneously rearranges to narcotine hemiacetal. This Papaver somniferum (Opium poppy) protein is 3-O-acetylpapaveroxine carboxylesterase CXE1.